The following is a 294-amino-acid chain: Cell division protein ZipA (294 aa).

A topological domain (periplasmic) is located at residue M1. Residues 2 to 22 (EIGLREWLILIGIIVIAGILF) form a helical membrane-spanning segment. Topologically, residues 23-294 (DGWRRMRGGK…FERRALTQKR (272 aa)) are cytoplasmic. Disordered stretches follow at residues 64 to 111 (THKE…GDLN) and 126 to 146 (KDDF…STPV). Residues 82–91 (ARERERDPKP) are compositionally biased toward basic and acidic residues.

It belongs to the ZipA family. Interacts with FtsZ via their C-terminal domains.

Its subcellular location is the cell inner membrane. In terms of biological role, essential cell division protein that stabilizes the FtsZ protofilaments by cross-linking them and that serves as a cytoplasmic membrane anchor for the Z ring. Also required for the recruitment to the septal ring of downstream cell division proteins. This Pseudomonas entomophila (strain L48) protein is Cell division protein ZipA.